Here is a 192-residue protein sequence, read N- to C-terminus: UPF0301 protein Bcep18194_A3962 (192 aa).

The protein belongs to the UPF0301 (AlgH) family.

This chain is UPF0301 protein Bcep18194_A3962, found in Burkholderia lata (strain ATCC 17760 / DSM 23089 / LMG 22485 / NCIMB 9086 / R18194 / 383).